A 438-amino-acid polypeptide reads, in one-letter code: Beta-1,3-galactosyl-O-glycosyl-glycoprotein beta-1,6-N-acetylglucosaminyltransferase 3 (438 aa).

Residues 1–6 lie on the Cytoplasmic side of the membrane; it reads MVQWKR. Residues 7 to 26 form a helical; Signal-anchor for type II membrane protein membrane-spanning segment; sequence LCQLHYLWALGCYMLLATVA. Over 27–438 the chain is Lumenal; it reads LKLSFRLKCD…RYKAIYGTEL (412 aa). Disulfide bonds link Cys70/Cys227, Cys161/Cys382, Cys182/Cys209, and Cys391/Cys423. N-linked (GlcNAc...) asparagine glycosylation is present at Asn289.

This sequence belongs to the glycosyltransferase 14 family. In terms of processing, N-glycosylated. Primarily expressed in mucus-secreting tissues. Expressed in colon, kidney, small intestine, trachea, and stomach, where mucin is produced.

The protein localises to the golgi apparatus membrane. It catalyses the reaction a 3-O-[beta-D-galactosyl-(1-&gt;3)-N-acetyl-alpha-D-galactosaminyl]-L-seryl-[protein] + UDP-N-acetyl-alpha-D-glucosamine = 3-O-{beta-D-galactosyl-(1-&gt;3)-[N-acetyl-beta-D-glucosaminyl-(1-&gt;6)]-N-acetyl-alpha-D-galactosaminyl}-L-seryl-[protein] + UDP + H(+). It carries out the reaction a 3-O-[beta-D-galactosyl-(1-&gt;3)-N-acetyl-alpha-D-galactosaminyl]-L-threonyl-[protein] + UDP-N-acetyl-alpha-D-glucosamine = a 3-O-{beta-D-galactosyl-(1-&gt;3)-[N-acetyl-beta-D-glucosaminyl-(1-&gt;6)]-N-acetyl-alpha-D-galactosaminyl}-L-threonyl-[protein] + UDP + H(+). The enzyme catalyses a beta-D-Gal-(1-&gt;4)-beta-D-GlcNAc-(1-&gt;3)-beta-D-Gal-(1-&gt;4)-beta-D-GlcNAc derivative + UDP-N-acetyl-alpha-D-glucosamine = a beta-D-Gal-(1-&gt;4)-beta-D-GlcNAc-(1-&gt;3)-[beta-D-GlcNAc-(1-&gt;6)]-beta-D-Gal-(1-&gt;4)-N-acetyl-beta-D-glucosaminyl derivative + UDP + H(+). The catalysed reaction is 3-O-[N-acetyl-beta-D-glucosaminyl-(1-&gt;3)-N-acetyl-alpha-D-galactosaminyl]-L-seryl-[protein] + UDP-N-acetyl-alpha-D-glucosamine = 3-O-[N-acetyl-beta-D-glucosaminyl-(1-&gt;3)-[N-acetyl-beta-D-glucosaminyl-(1-&gt;6)]-N-acetyl-alpha-D-galactosaminyl]-L-seryl-[protein] + UDP + H(+). It catalyses the reaction a 3-O-[N-acetyl-beta-D-glucosaminyl-(1-&gt;3)-N-acetyl-alpha-D-galactosaminyl]-L-threonyl-[protein] + UDP-N-acetyl-alpha-D-glucosamine = 3-O-[N-acetyl-beta-D-glucosaminyl-(1-&gt;3)-[N-acetyl-beta-D-glucosaminyl-(1-&gt;6)]-N-acetyl-alpha-D-galactosaminyl]-L-threonyl-[protein] + UDP + H(+). It functions in the pathway protein modification; protein glycosylation. In terms of biological role, glycosyltransferase that can synthesize all known mucin beta 6 N-acetylglucosaminides. Mediates core 2 and core 4 O-glycan branching, 2 important steps in mucin-type biosynthesis. Also has I-branching enzyme activity by converting linear into branched poly-N-acetyllactosaminoglycans, leading to introduce the blood group I antigen during embryonic development. In Homo sapiens (Human), this protein is Beta-1,3-galactosyl-O-glycosyl-glycoprotein beta-1,6-N-acetylglucosaminyltransferase 3 (GCNT3).